Reading from the N-terminus, the 145-residue chain is uncharacterized protein (145 aa).

Helical transmembrane passes span 3 to 23 (VGIILGILSAMGFLVFLGIGG), 83 to 103 (YVIDVGYSILFLVTLTLYLVP), and 105 to 125 (LSLLVWVTFFGATVFMIMLWI).

The protein resides in the cell membrane. This is an uncharacterized protein from Methanocaldococcus jannaschii (strain ATCC 43067 / DSM 2661 / JAL-1 / JCM 10045 / NBRC 100440) (Methanococcus jannaschii).